A 252-amino-acid polypeptide reads, in one-letter code: Imidazole glycerol phosphate synthase subunit HisF (252 aa).

Active-site residues include aspartate 11 and aspartate 130.

It belongs to the HisA/HisF family. In terms of assembly, heterodimer of HisH and HisF.

Its subcellular location is the cytoplasm. The catalysed reaction is 5-[(5-phospho-1-deoxy-D-ribulos-1-ylimino)methylamino]-1-(5-phospho-beta-D-ribosyl)imidazole-4-carboxamide + L-glutamine = D-erythro-1-(imidazol-4-yl)glycerol 3-phosphate + 5-amino-1-(5-phospho-beta-D-ribosyl)imidazole-4-carboxamide + L-glutamate + H(+). Its pathway is amino-acid biosynthesis; L-histidine biosynthesis; L-histidine from 5-phospho-alpha-D-ribose 1-diphosphate: step 5/9. IGPS catalyzes the conversion of PRFAR and glutamine to IGP, AICAR and glutamate. The HisF subunit catalyzes the cyclization activity that produces IGP and AICAR from PRFAR using the ammonia provided by the HisH subunit. The chain is Imidazole glycerol phosphate synthase subunit HisF from Streptococcus sanguinis (strain SK36).